The primary structure comprises 184 residues: Large ribosomal subunit protein eL14 (184 aa).

A disordered region spans residues 149–184 (KNAKKVDSTPAAKKRIEKARAARKAKPTAAKEKSKK). Basic residues predominate over residues 160-174 (AKKRIEKARAARKAK).

Belongs to the eukaryotic ribosomal protein eL14 family.

The sequence is that of Large ribosomal subunit protein eL14 from Trypanosoma congolense.